The primary structure comprises 347 residues: uncharacterized protein (347 aa).

The N-terminal stretch at 1-21 is a signal peptide; that stretch reads MNKKSLNIVVMFGILMILAFS.

This sequence belongs to the bacterial solute-binding protein 1 family. WtpA subfamily.

This is an uncharacterized protein from Methanococcus maripaludis (strain C5 / ATCC BAA-1333).